We begin with the raw amino-acid sequence, 427 residues long: Zinc finger protein 2 (427 aa).

In terms of domain architecture, KRAB spans 14–85 (VTFEDVAVTF…GFHGSEEKTW (72 aa)). The tract at residues 111–142 (HRKQSSLCPKREIQTLTGGPEPEKESPKARTC) is disordered. 8 C2H2-type zinc fingers span residues 169–191 (QECSECGKTFFDHSSLIRHQRTH), 197–219 (YDCPECGKAFSHRSSLSRHLMFH), 225–247 (YECDACGKAFFDRSSLTVHQRIH), 253–275 (FKCNDCGKAFFDRSSLTRHQRIH), 281–303 (YECQQCGKAFSQKSILTRHLLTH), 309–331 (YECRDCGKAFYGVTSLNRHQKVH), 337–359 (YQCSECGKAFFDRSSLTQHQKIH), and 365–387 (YECGECGKAFSQRCRLTRHQRVH). The C2H2-type 9; degenerate zinc finger occupies 393–415 (FECSVCGKEFSSKSSIIQHQRRY).

Belongs to the krueppel C2H2-type zinc-finger protein family.

It is found in the nucleus. Functionally, may be involved in transcriptional regulation. This Mus musculus (Mouse) protein is Zinc finger protein 2.